Consider the following 580-residue polypeptide: Proline--tRNA ligase (580 aa).

Belongs to the class-II aminoacyl-tRNA synthetase family. ProS type 1 subfamily. In terms of assembly, homodimer.

It is found in the cytoplasm. It catalyses the reaction tRNA(Pro) + L-proline + ATP = L-prolyl-tRNA(Pro) + AMP + diphosphate. Functionally, catalyzes the attachment of proline to tRNA(Pro) in a two-step reaction: proline is first activated by ATP to form Pro-AMP and then transferred to the acceptor end of tRNA(Pro). As ProRS can inadvertently accommodate and process non-cognate amino acids such as alanine and cysteine, to avoid such errors it has two additional distinct editing activities against alanine. One activity is designated as 'pretransfer' editing and involves the tRNA(Pro)-independent hydrolysis of activated Ala-AMP. The other activity is designated 'posttransfer' editing and involves deacylation of mischarged Ala-tRNA(Pro). The misacylated Cys-tRNA(Pro) is not edited by ProRS. This chain is Proline--tRNA ligase, found in Albidiferax ferrireducens (strain ATCC BAA-621 / DSM 15236 / T118) (Rhodoferax ferrireducens).